A 164-amino-acid chain; its full sequence is Peptide methionine sulfoxide reductase MsrA (164 aa).

Residue C16 is part of the active site.

This sequence belongs to the MsrA Met sulfoxide reductase family.

The catalysed reaction is L-methionyl-[protein] + [thioredoxin]-disulfide + H2O = L-methionyl-(S)-S-oxide-[protein] + [thioredoxin]-dithiol. It carries out the reaction [thioredoxin]-disulfide + L-methionine + H2O = L-methionine (S)-S-oxide + [thioredoxin]-dithiol. Functionally, has an important function as a repair enzyme for proteins that have been inactivated by oxidation. Catalyzes the reversible oxidation-reduction of methionine sulfoxide in proteins to methionine. The chain is Peptide methionine sulfoxide reductase MsrA from Methanoculleus marisnigri (strain ATCC 35101 / DSM 1498 / JR1).